The chain runs to 1067 residues: [F-actin]-monooxygenase MICAL1 (1067 aa).

The interval 1-489 is monooxygenase domain; that stretch reads MASPTSTNPA…RDLYDVLAKE (489 aa). FAD contacts are provided by residues Cys95, 114–116, 121–123, Phe181, Tyr293, and Asp393; these read EKR and RHN. Thr475 carries the phosphothreonine modification. In terms of domain architecture, Calponin-homology (CH) spans 508–612; it reads AGTQEELLRW…YLSHFHSAFK (105 aa). The residue at position 617 (Ser617) is a Phosphoserine. A disordered region spans residues 645–688; the sequence is SRAKENAEDAGGKKLRLEMEAETPSTEVPPDPEPGVPLTPPSQH. A compositionally biased stretch (basic and acidic residues) spans 646 to 663; sequence RAKENAEDAGGKKLRLEM. The stretch at 646 to 666 forms a coiled coil; that stretch reads RAKENAEDAGGKKLRLEMEAE. Residues 671–684 are compositionally biased toward pro residues; it reads EVPPDPEPGVPLTP. Positions 695–757 constitute an LIM zinc-binding domain; the sequence is DLCALCGEHL…LQHLPQTDHK (63 aa). 8 residues coordinate Zn(2+): Cys697, Cys700, His718, Cys721, Cys724, Cys727, Cys747, and His750. Basic and acidic residues predominate over residues 755-766; sequence DHKAEGSDRGPE. Disordered regions lie at residues 755–838 and 867–886; these read DHKA…RSCS and KEEKESPFSSEEEEEDVPLD. Over residues 773–789 the composition is skewed to polar residues; sequence PSENSMPPGLSTPTASQ. 3 positions are modified to phosphoserine: Ser872, Ser875, and Ser876. The segment covering 876–886 has biased composition (acidic residues); that stretch reads SEEEEEDVPLD. Positions 901–1067 are important for interaction with RAB8A; sequence GTMNNYPTWR…ELALGTGAQG (167 aa). In terms of domain architecture, bMERB spans 918–1067; the sequence is KEEEMKRFCK…ELALGTGAQG (150 aa). Coiled coils occupy residues 919-962 and 999-1027; these read EEEM…QSSS and NLEEKQWQLDQELRGYMNREENLKTAADR. A Phosphoserine modification is found at Ser1057.

This sequence belongs to the Mical family. In terms of assembly, interacts with STK38 and STK38L. Interacts with RAB1B, RAB8A, RAB10, RAB13, RAB15 and RAB35 (in their GTP-bound forms); binding to RAB1B is of low affinity compared to other Rab proteins; at least in case of RAB8A and RAB10 can bind 2 molecules of the Rab proteins simultaneously; ternary complex formation of RAB8A, RAB13 and MICAL1 is possible. Associates with the SH3 domain of NEDD9. Interacts with VIM and PLXNA3. Interacts with GRAF1/ARHGAP26, GRAF2/ARHGAP10, RAB8A, RAB8B and RAB10; may bind simultaneously to GRAFs and Rabs and connects GRAFs to Rabs. Does not interact with RAB1 and RAB11A. FAD serves as cofactor. Expressed in the thymus, lung, spleen, kidney, testis and hematopoietic cells.

It localises to the cytoplasm. It is found in the cytoskeleton. The protein resides in the endosome membrane. Its subcellular location is the midbody. It catalyses the reaction L-methionyl-[F-actin] + NADPH + O2 + H(+) = L-methionyl-(R)-S-oxide-[F-actin] + NADP(+) + H2O. The catalysed reaction is NADPH + O2 + H(+) = H2O2 + NADP(+). Monooxygenase that promotes depolymerization of F-actin by mediating oxidation of specific methionine residues on actin to form methionine-sulfoxide, resulting in actin filament disassembly and preventing repolymerization. In the absence of actin, it also functions as a NADPH oxidase producing H(2)O(2). Acts as a cytoskeletal regulator that connects NEDD9 to intermediate filaments. Also acts as a negative regulator of apoptosis via its interaction with STK38 and STK38L; acts by antagonizing STK38 and STK38L activation by MST1/STK4. Involved in regulation of lamina-specific connectivity in the nervous system such as the development of lamina-restricted hippocampal connections. Through redox regulation of the actin cytoskeleton controls the intracellular distribution of secretory vesicles containing L1/neurofascin/NgCAM family proteins in neurons, thereby regulating their cell surface levels. May act as Rab effector protein and play a role in vesicle trafficking. Promotes endosomal tubule extension by associating with RAB8 (RAB8A or RAB8B), RAB10 and GRAF (GRAF1/ARHGAP26 or GRAF2/ARHGAP10) on the endosomal membrane which may connect GRAFs to Rabs, thereby participating in neosynthesized Rab8-Rab10-Rab11-dependent protein export. In Homo sapiens (Human), this protein is [F-actin]-monooxygenase MICAL1 (MICAL1).